The following is a 588-amino-acid chain: DELLA protein GAI (588 aa).

The segment covering 1-15 (MKRDRDRDREREKRA) has biased composition (basic and acidic residues). Residues 1 to 38 (MKRDRDRDREREKRAFSNGAVSSGKSKIWEEDEEEKPD) form a disordered region. The DELLA motif signature appears at 42–46 (DELLA). The interval 152–177 (GAVFNSDSNKRHRSTTSSFSTTSSSM) is disordered. Positions 166 to 177 (TTSSFSTTSSSM) are enriched in low complexity. Residues 190–574 (VDSQETGVRL…RPLIATSAWK (385 aa)) enclose the GRAS domain. A leucine repeat I (LRI) region spans residues 197–251 (VRLVHTLMACAEAVQQENLTLADQLVRHIGILAVSQSGAMRKVATYFAEALARRI). Residues 269–334 (QMHFYETCPY…GGPPAFRLTG (66 aa)) are VHIID. Residues 300–304 (VHVID) carry the VHIID motif. Residues 348-380 (QVGWKLAQLAETIGVEFEFRGFVANSLADLDAT) are leucine repeat II (LRII). Residues 392 to 495 (VAINSVFELH…EVYLGRQICN (104 aa)) are PFYRE. Positions 400 to 404 (LHRLL) match the LXXLL motif motif. The tract at residues 498 to 574 (ACEGSDRVER…RPLIATSAWK (77 aa)) is SAW.

The protein belongs to the GRAS family. DELLA subfamily. Post-translationally, phosphorylated. Ubiquitinated. Upon GA application it is ubiquitinated, leading to its subsequent degradation. In terms of tissue distribution, expressed in both vegetative and reproductive tissues.

The protein localises to the nucleus. Probable transcriptional regulator that acts as a repressor of the gibberellin (GA) signaling pathway. Probably acts by participating in large multiprotein complexes that repress transcription of GA-inducible genes. Upon GA application, it is degraded by the proteasome, allowing the GA signaling pathway. Its degradation is not essential for germination. The sequence is that of DELLA protein GAI (GAI) from Solanum lycopersicum (Tomato).